A 109-amino-acid chain; its full sequence is uncharacterized protein (109 aa).

3 consecutive transmembrane segments (helical) span residues Tyr16 to Leu36, Thr54 to Leu74, and Phe80 to Met100.

Its subcellular location is the membrane. This is an uncharacterized protein from Schizosaccharomyces pombe (strain 972 / ATCC 24843) (Fission yeast).